The chain runs to 268 residues: Mediator of RNA polymerase II transcription subunit 8-A (268 aa).

2 coiled-coil regions span residues 1–26 (MQREEKQLEACLDALISQVSDIKNSL) and 117–160 (VEEL…EERE). The disordered stretch occupies residues 190 to 268 (GLSNRRPPGQ…KSASMHPYQR (79 aa)). Residues 223–246 (VPMSLQSNQQQQHMAGVSMSQGNQ) are compositionally biased toward polar residues.

Belongs to the Mediator complex subunit 8 family. In terms of assembly, component of the Mediator complex. May be part of a multisubunit E3 ubiquitin-protein ligase complex.

Its subcellular location is the nucleus. The protein operates within protein modification; protein ubiquitination. Component of the Mediator complex, a coactivator involved in the regulated transcription of nearly all RNA polymerase II-dependent genes. Mediator functions as a bridge to convey information from gene-specific regulatory proteins to the basal RNA polymerase II transcription machinery. Mediator is recruited to promoters by direct interactions with regulatory proteins and serves as a scaffold for the assembly of a functional preinitiation complex with RNA polymerase II and the general transcription factors. May play a role as a target recruitment subunit in E3 ubiquitin-protein ligase complexes and thus in ubiquitination and subsequent proteasomal degradation of target proteins. This is Mediator of RNA polymerase II transcription subunit 8-A (med8-a) from Xenopus laevis (African clawed frog).